Consider the following 508-residue polypeptide: Photosystem II CP47 reaction center protein (508 aa).

6 helical membrane passes run 21 to 36, 101 to 115, 140 to 156, 203 to 218, 237 to 252, and 457 to 472; these read AVHI…WAGS, ILFS…IWHW, GIHL…FGAF, IAAG…FHLS, VLSS…AFVV, and SFAL…HGAR.

Belongs to the PsbB/PsbC family. PsbB subfamily. As to quaternary structure, PSII is composed of 1 copy each of membrane proteins PsbA, PsbB, PsbC, PsbD, PsbE, PsbF, PsbH, PsbI, PsbJ, PsbK, PsbL, PsbM, PsbT, PsbX, PsbY, PsbZ, Psb30/Ycf12, at least 3 peripheral proteins of the oxygen-evolving complex and a large number of cofactors. It forms dimeric complexes. The cofactor is Binds multiple chlorophylls. PSII binds additional chlorophylls, carotenoids and specific lipids..

Its subcellular location is the plastid. The protein localises to the chloroplast thylakoid membrane. One of the components of the core complex of photosystem II (PSII). It binds chlorophyll and helps catalyze the primary light-induced photochemical processes of PSII. PSII is a light-driven water:plastoquinone oxidoreductase, using light energy to abstract electrons from H(2)O, generating O(2) and a proton gradient subsequently used for ATP formation. This Oenothera argillicola (Appalachian evening primrose) protein is Photosystem II CP47 reaction center protein.